A 133-amino-acid chain; its full sequence is S-protein homolog 21 (133 aa).

Positions 1 to 21 (MKNLSIFLFVVGLCMISDVYG) are cleaved as a signal peptide.

The protein belongs to the plant self-incompatibility (S1) protein family.

The protein resides in the secreted. The polypeptide is S-protein homolog 21 (Arabidopsis thaliana (Mouse-ear cress)).